A 328-amino-acid chain; its full sequence is Neuropeptides B/W receptor type 1 (328 aa).

Residues 1-37 (MDNASFSEPWPANASGPDPALSCSNASTLAPLPAPLA) are Extracellular-facing. 3 N-linked (GlcNAc...) asparagine glycosylation sites follow: Asn3, Asn13, and Asn25. The chain crosses the membrane as a helical span at residues 38–61 (VAVPVVYAVICAVGLAGNSAVLYV). Residues 62–72 (LLRAPRMKTVT) lie on the Cytoplasmic side of the membrane. The helical transmembrane segment at 73-97 (NLFILNLAIADELFTLVLPINIADF) threads the bilayer. The Extracellular portion of the chain corresponds to 98-112 (LLRQWPFGELMCKLI). The cysteines at positions 109 and 188 are disulfide-linked. A helical transmembrane segment spans residues 113-132 (VAIDQYNTFSSLYFLTVMSA). Residues 133-157 (DRYLVVLATAESRRVAGRTYSAARA) are Cytoplasmic-facing. The helical transmembrane segment at 158–177 (VSLAVWGIVTLVVLPFAVFA) threads the bilayer. The Extracellular portion of the chain corresponds to 178 to 202 (RLDDEQGRRQCVLVFPQPEAFWWRA). A helical membrane pass occupies residues 203-224 (SRLYTLVLGFAIPVSTICVLYT). At 225 to 248 (TLLCRLHAMRLDSHAKALERAKKR) the chain is on the cytoplasmic side. A helical transmembrane segment spans residues 249–273 (VTFLVVAILAVCLLCWTPYHLSTVV). Residues 274–283 (ALTTDLPQTP) are Extracellular-facing. The chain crosses the membrane as a helical span at residues 284–298 (LVIAISYFITSLSYA). At 299–328 (NSCLNPFLYAFLDASFRRNLRQLITCRAAA) the chain is on the cytoplasmic side.

Belongs to the G-protein coupled receptor 1 family. In terms of tissue distribution, found in cerebellum and frontal cortex. Detected at high levels in hippocampus, amygdala and trachea; at moderate levels in fetal brain, pituitary gland and prostate. Not in caudate, accumbens, kidney or liver. Also detected at high levels in lung carcinoma.

The protein resides in the cell membrane. Functionally, interacts specifically with a number of opioid ligands. Receptor for neuropeptides B and W, which may be involved in neuroendocrine system regulation, food intake and the organization of other signals. Has a higher affinity for neuropeptide B. The polypeptide is Neuropeptides B/W receptor type 1 (NPBWR1) (Homo sapiens (Human)).